The chain runs to 208 residues: Outer-membrane lipoprotein carrier protein (208 aa).

The signal sequence occupies residues 1 to 21; the sequence is MRLIRTLFVAALAMGASLAHA.

Belongs to the LolA family. In terms of assembly, monomer.

It is found in the periplasm. Its function is as follows. Participates in the translocation of lipoproteins from the inner membrane to the outer membrane. Only forms a complex with a lipoprotein if the residue after the N-terminal Cys is not an aspartate (The Asp acts as a targeting signal to indicate that the lipoprotein should stay in the inner membrane). In Pseudomonas aeruginosa (strain UCBPP-PA14), this protein is Outer-membrane lipoprotein carrier protein.